The chain runs to 198 residues: Elongation factor Ts (198 aa).

The tract at residues 81 to 84 (TDFV) is involved in Mg(2+) ion dislocation from EF-Tu.

It belongs to the EF-Ts family.

It localises to the cytoplasm. Associates with the EF-Tu.GDP complex and induces the exchange of GDP to GTP. It remains bound to the aminoacyl-tRNA.EF-Tu.GTP complex up to the GTP hydrolysis stage on the ribosome. The sequence is that of Elongation factor Ts from Leptospira biflexa serovar Patoc (strain Patoc 1 / Ames).